Here is a 1072-residue protein sequence, read N- to C-terminus: Carbamoyl phosphate synthase large chain (1072 aa).

Positions 1-401 (MPKRLDINTI…SLLKAVRSLE (401 aa)) are carboxyphosphate synthetic domain. ATP contacts are provided by Arg129, Arg169, Gly175, Gly176, Lys208, Ile210, Glu215, Gly241, Val242, His243, Gln284, and Glu298. Positions 133–327 (RTLMQDLNEP…IAKLAAKIAV (195 aa)) constitute an ATP-grasp 1 domain. Positions 284, 298, and 300 each coordinate Mg(2+). Gln284, Glu298, and Asn300 together coordinate Mn(2+). Residues 402–546 (LGIYHLELDH…YSTYAEENES (145 aa)) form an oligomerization domain region. Residues 547–929 (IVTDRKSVVV…ALYKGLVASG (383 aa)) are carbamoyl phosphate synthetic domain. The region spanning 671-861 (EAALTKLGIP…MANVATKVIL (191 aa)) is the ATP-grasp 2 domain. Residues Arg707, Arg746, Glu752, Gly777, Val778, His779, Ser780, Gln820, and Glu832 each contribute to the ATP site. Residues Gln820, Glu832, and Asn834 each coordinate Mg(2+). Residues Gln820, Glu832, and Asn834 each coordinate Mn(2+). Residues 930 to 1072 (INIPTHGSVI…QTKRHEVVHA (143 aa)) enclose the MGS-like domain. Residues 930–1072 (INIPTHGSVI…QTKRHEVVHA (143 aa)) are allosteric domain.

This sequence belongs to the CarB family. Composed of two chains; the small (or glutamine) chain promotes the hydrolysis of glutamine to ammonia, which is used by the large (or ammonia) chain to synthesize carbamoyl phosphate. Tetramer of heterodimers (alpha,beta)4. Mg(2+) is required as a cofactor. It depends on Mn(2+) as a cofactor.

It carries out the reaction hydrogencarbonate + L-glutamine + 2 ATP + H2O = carbamoyl phosphate + L-glutamate + 2 ADP + phosphate + 2 H(+). The enzyme catalyses hydrogencarbonate + NH4(+) + 2 ATP = carbamoyl phosphate + 2 ADP + phosphate + 2 H(+). Its pathway is amino-acid biosynthesis; L-arginine biosynthesis; carbamoyl phosphate from bicarbonate: step 1/1. It functions in the pathway pyrimidine metabolism; UMP biosynthesis via de novo pathway; (S)-dihydroorotate from bicarbonate: step 1/3. Large subunit of the glutamine-dependent carbamoyl phosphate synthetase (CPSase). CPSase catalyzes the formation of carbamoyl phosphate from the ammonia moiety of glutamine, carbonate, and phosphate donated by ATP, constituting the first step of 2 biosynthetic pathways, one leading to arginine and/or urea and the other to pyrimidine nucleotides. The large subunit (synthetase) binds the substrates ammonia (free or transferred from glutamine from the small subunit), hydrogencarbonate and ATP and carries out an ATP-coupled ligase reaction, activating hydrogencarbonate by forming carboxy phosphate which reacts with ammonia to form carbamoyl phosphate. The protein is Carbamoyl phosphate synthase large chain of Bacillus cereus (strain ATCC 10987 / NRS 248).